Consider the following 1306-residue polypeptide: Receptor-type tyrosine-protein phosphatase C (1306 aa).

A signal peptide spans M1–G25. Residues Q26–K577 are Extracellular-facing. A disordered region spans residues P28 to V163. Composition is skewed to polar residues over residues T52 to S61 and S70 to A131. 10 N-linked (GlcNAc...) asparagine glycosylation sites follow: N80, N92, N97, N186, N192, N199, N234, N262, N272, and N278. N286 carries N-linked (GlcNAc...) asparagine; atypical glycosylation. N337, N380, N421, N470, N490, and N531 each carry an N-linked (GlcNAc...) asparagine glycan. Fibronectin type-III domains are found at residues S391–A483 and P484–S576. Residues A578 to L598 traverse the membrane as a helical segment. The Cytoplasmic segment spans residues Y599–S1306. Tyrosine-protein phosphatase domains lie at F653–Y912 and L944–T1228. Y683 is subject to Phosphotyrosine. Substrate contacts are provided by residues D821, C853 to R859, and Q897. C853 (phosphocysteine intermediate) is an active-site residue. Phosphoserine is present on residues S975, S994, S997, S1001, S1004, S1005, and S1009. Positions M993–P1014 are disordered. Residues H999–E1012 are compositionally biased toward acidic residues. Catalysis depends on C1169, which acts as the Phosphocysteine intermediate. The interval C1261 to S1306 is disordered. Phosphoserine is present on S1299.

It belongs to the protein-tyrosine phosphatase family. Receptor class 1/6 subfamily. Binds GANAB and PRKCSH. Interacts with SKAP1. Interacts with DPP4; the interaction is enhanced in an interleukin-12-dependent manner in activated lymphocytes. Interacts with CD53; this interaction stabilizes PTPRC on the membrane and is required for optimal phosphatase activity. As to quaternary structure, interacts with CLEC10A. In terms of assembly, does not interact with CLEC10A. (Microbial infection) Interacts with human cytomegalovirus protein UL11; the interaction is required for binding of UL11 to T-cells. In terms of processing, heavily N- and O-glycosylated. As to expression, isoform 1: Detected in thymocytes. Isoform 2: Detected in thymocytes. Isoform 3: Detected in thymocytes. Isoform 4: Not detected in thymocytes. Isoform 5: Detected in thymocytes. Isoform 6: Not detected in thymocytes. Isoform 7: Detected in thymocytes. Isoform 8: Not detected in thymocytes.

The protein resides in the cell membrane. It is found in the membrane raft. The protein localises to the synapse. It carries out the reaction O-phospho-L-tyrosyl-[protein] + H2O = L-tyrosyl-[protein] + phosphate. Protein tyrosine-protein phosphatase required for T-cell activation through the antigen receptor. Acts as a positive regulator of T-cell coactivation upon binding to DPP4. The first PTPase domain has enzymatic activity, while the second one seems to affect the substrate specificity of the first one. Upon T-cell activation, recruits and dephosphorylates SKAP1 and FYN. Dephosphorylates LYN, and thereby modulates LYN activity. Interacts with CLEC10A at antigen presenting cell-T cell contact; CLEC10A on immature dendritic cells recognizes Tn antigen-carrying PTPRC/CD45 receptor on effector T cells and modulates T cell activation threshold to limit autoreactivity. Its function is as follows. (Microbial infection) Acts as a receptor for human cytomegalovirus protein UL11 and mediates binding of UL11 to T-cells, leading to reduced induction of tyrosine phosphorylation of multiple signaling proteins upon T-cell receptor stimulation and impaired T-cell proliferation. In Homo sapiens (Human), this protein is Receptor-type tyrosine-protein phosphatase C.